The following is a 219-amino-acid chain: Putative NAD(P)H nitroreductase SSP0379 (219 aa).

The protein belongs to the nitroreductase family. The cofactor is FMN.

In Staphylococcus saprophyticus subsp. saprophyticus (strain ATCC 15305 / DSM 20229 / NCIMB 8711 / NCTC 7292 / S-41), this protein is Putative NAD(P)H nitroreductase SSP0379.